The following is a 177-amino-acid chain: Large ribosomal subunit protein uL6 (177 aa).

Belongs to the universal ribosomal protein uL6 family. Part of the 50S ribosomal subunit.

This protein binds to the 23S rRNA, and is important in its secondary structure. It is located near the subunit interface in the base of the L7/L12 stalk, and near the tRNA binding site of the peptidyltransferase center. This is Large ribosomal subunit protein uL6 from Paramagnetospirillum magneticum (strain ATCC 700264 / AMB-1) (Magnetospirillum magneticum).